Here is a 1032-residue protein sequence, read N- to C-terminus: Exportin-T (1032 aa).

This sequence belongs to the exportin family.

The protein resides in the nucleus. Its subcellular location is the cytoplasm. In terms of biological role, tRNA nucleus export receptor which facilitates tRNA translocation across the nuclear pore complex. Involved in pre-tRNA splicing, probably by affecting the interaction of pre-tRNA with splicing endonuclease. The sequence is that of Exportin-T (los1) from Aspergillus fumigatus (strain CBS 144.89 / FGSC A1163 / CEA10) (Neosartorya fumigata).